Consider the following 228-residue polypeptide: Phosphoglycolate phosphatase (228 aa).

Asp9 functions as the Nucleophile in the catalytic mechanism. Mg(2+)-binding residues include Asp9 and Asp11. Residue Lys151 coordinates substrate. Residues Asp174 and Asp178 each coordinate Mg(2+).

Belongs to the archaeal SPP-like hydrolase family. Mg(2+) serves as cofactor.

It carries out the reaction 2-phosphoglycolate + H2O = glycolate + phosphate. Catalyzes the dephosphorylation of 2-phosphoglycolate. This chain is Phosphoglycolate phosphatase, found in Pyrobaculum neutrophilum (strain DSM 2338 / JCM 9278 / NBRC 100436 / V24Sta) (Thermoproteus neutrophilus).